Consider the following 718-residue polypeptide: Polyribonucleotide nucleotidyltransferase (718 aa).

The Mg(2+) site is built by Asp-496 and Asp-502. Positions 563–622 (PRLLTIKIDPDMIGLVIGPGGKTIKGITEETGAKIDIEDDGTVTISAVDENKAKRARNIV) constitute a KH domain. Residues 632–700 (GDVYAGRVTR…NKGRINLTRL (69 aa)) form the S1 motif domain.

The protein belongs to the polyribonucleotide nucleotidyltransferase family. Mg(2+) is required as a cofactor.

Its subcellular location is the cytoplasm. It carries out the reaction RNA(n+1) + phosphate = RNA(n) + a ribonucleoside 5'-diphosphate. Its function is as follows. Involved in mRNA degradation. Catalyzes the phosphorolysis of single-stranded polyribonucleotides processively in the 3'- to 5'-direction. The chain is Polyribonucleotide nucleotidyltransferase from Trichormus variabilis (strain ATCC 29413 / PCC 7937) (Anabaena variabilis).